The primary structure comprises 348 residues: Actin maturation protease (348 aa).

Positions 1–18 (MISPCSPPLEPPVPPPET) are enriched in pro residues. Residues 1-64 (MISPCSPPLE…LPPPPRTTGF (64 aa)) form a disordered region. Residues 34 to 48 (NLPELAFPPSSFQAS) show a composition bias toward low complexity. Residues 49-60 (VPPPPPLPPPPR) show a composition bias toward pro residues. Positions 121–241 (SLIQEGPQCG…WAVSAGVLLG (121 aa)) are peptidase C39-like. The active site involves Cys-129. Ser-313 is modified (phosphoserine).

Belongs to the ACTMAP family. Interacts (via N-terminus) with PFN2; the interaction may facilitate efficient cleavage of the acetylated N-terminus of immature actin. Interacts with PFN1.

It localises to the cytoplasm. It catalyses the reaction N-terminal N(alpha)-acetyl-L-methionyl-L-aspartyl-[protein] + H2O = N-terminal L-aspartyl-[protein] + N-acetyl-L-methionine. The enzyme catalyses N-terminal N(alpha)-acetyl-L-methionyl-L-glutamyl-[protein] + H2O = N-terminal L-glutamyl-[protein] + N-acetyl-L-methionine. It carries out the reaction N-terminal N(alpha)-acetyl-L-cysteinyl-L-aspartyl-[protein] + H2O = N-terminal L-aspartyl-[protein] + N-acetyl-L-cysteine. The catalysed reaction is N-terminal N(alpha)-acetyl-L-cysteinyl-L-glutamyl-[protein] + H2O = N-terminal L-glutamyl-[protein] + N-acetyl-L-cysteine. Its function is as follows. Actin maturation protease that specifically mediates the cleavage of immature acetylated N-terminal actin, thereby contributing to actin maturation. Cleaves N-terminal acetylated methionine of immature cytoplasmic beta- and gamma-actins ACTB and ACTG1 after translation. Cleaves N-terminal acetylated cysteine of muscle alpha-actins ACTA1, ACTC1 and ACTA2 after canonical removal of N-terminal methionine. This is Actin maturation protease from Bos taurus (Bovine).